The primary structure comprises 222 residues: Orotate phosphoribosyltransferase (222 aa).

Lys29 is a 5-phospho-alpha-D-ribose 1-diphosphate binding site. 37-38 lines the orotate pocket; the sequence is FF. 5-phospho-alpha-D-ribose 1-diphosphate contacts are provided by residues 75-76, Arg101, Lys102, Lys105, His107, and 126-134; these read YK and DDVISAGTS. Orotate-binding residues include Ser130 and Arg158.

It belongs to the purine/pyrimidine phosphoribosyltransferase family. PyrE subfamily. Homodimer. Mg(2+) serves as cofactor.

The enzyme catalyses orotidine 5'-phosphate + diphosphate = orotate + 5-phospho-alpha-D-ribose 1-diphosphate. It participates in pyrimidine metabolism; UMP biosynthesis via de novo pathway; UMP from orotate: step 1/2. Functionally, catalyzes the transfer of a ribosyl phosphate group from 5-phosphoribose 1-diphosphate to orotate, leading to the formation of orotidine monophosphate (OMP). In Polynucleobacter necessarius subsp. necessarius (strain STIR1), this protein is Orotate phosphoribosyltransferase.